The primary structure comprises 591 residues: Cineole synthase 1, chloroplastic (591 aa).

The transit peptide at 1–44 (MSSLIMQVVIPKPAKFFHNNLFSLSSKRHRFSTTTTTRGGRWAR) directs the protein to the chloroplast. (2E)-geranyl diphosphate-binding residues include R308, D345, D349, R486, and D489. D345 and D349 together coordinate Mg(2+). The DDXXD motif signature appears at 345–349 (DDVFD). 3 residues coordinate Mg(2+): D489, T493, and E497.

It belongs to the terpene synthase family. Tpsb subfamily. Monomer. Requires Mg(2+) as cofactor. Mn(2+) is required as a cofactor.

It localises to the plastid. The protein localises to the chloroplast. It catalyses the reaction (2E)-geranyl diphosphate + H2O = 1,8-cineole + diphosphate. The enzyme catalyses (2E)-geranyl diphosphate = alpha-pinene + diphosphate. It carries out the reaction (2E)-geranyl diphosphate = beta-pinene + diphosphate. The catalysed reaction is (2E)-geranyl diphosphate + H2O = (S)-alpha-terpineol + diphosphate. It catalyses the reaction (2E)-geranyl diphosphate = beta-myrcene + diphosphate. The enzyme catalyses (2E)-geranyl diphosphate = sabinene + diphosphate. It functions in the pathway secondary metabolite biosynthesis; terpenoid biosynthesis. Its function is as follows. Monoterpene synthase (TPS) involved in the biosynthesis of monoterpene natural products, components of the chemical defense arsenal. Catalyzes the conversion of (2E)-geranyl diphosphate (GPP) into 1,8-cineole, and, as minor products, alpha-terpineol, beta-pinene, alpha-pinene, sabinene and myrcene. In Salvia fruticosa (Greek sage), this protein is Cineole synthase 1, chloroplastic.